The sequence spans 490 residues: Aspartyl/glutamyl-tRNA(Asn/Gln) amidotransferase subunit B (490 aa).

The protein belongs to the GatB/GatE family. GatB subfamily. As to quaternary structure, heterotrimer of A, B and C subunits.

It catalyses the reaction L-glutamyl-tRNA(Gln) + L-glutamine + ATP + H2O = L-glutaminyl-tRNA(Gln) + L-glutamate + ADP + phosphate + H(+). It carries out the reaction L-aspartyl-tRNA(Asn) + L-glutamine + ATP + H2O = L-asparaginyl-tRNA(Asn) + L-glutamate + ADP + phosphate + 2 H(+). Functionally, allows the formation of correctly charged Asn-tRNA(Asn) or Gln-tRNA(Gln) through the transamidation of misacylated Asp-tRNA(Asn) or Glu-tRNA(Gln) in organisms which lack either or both of asparaginyl-tRNA or glutaminyl-tRNA synthetases. The reaction takes place in the presence of glutamine and ATP through an activated phospho-Asp-tRNA(Asn) or phospho-Glu-tRNA(Gln). This is Aspartyl/glutamyl-tRNA(Asn/Gln) amidotransferase subunit B from Methylorubrum extorquens (strain PA1) (Methylobacterium extorquens).